We begin with the raw amino-acid sequence, 92 residues long: Small ribosomal subunit protein uS19 (92 aa).

Belongs to the universal ribosomal protein uS19 family.

Functionally, protein S19 forms a complex with S13 that binds strongly to the 16S ribosomal RNA. The chain is Small ribosomal subunit protein uS19 from Bartonella bacilliformis (strain ATCC 35685 / KC583 / Herrer 020/F12,63).